The chain runs to 644 residues: 1-deoxy-D-xylulose-5-phosphate synthase (644 aa).

Thiamine diphosphate-binding positions include histidine 72 and 113–115; that span reads GHA. Aspartate 144 lines the Mg(2+) pocket. Residues 145-146, asparagine 174, tyrosine 287, and glutamate 370 contribute to the thiamine diphosphate site; that span reads GA. Asparagine 174 contacts Mg(2+).

It belongs to the transketolase family. DXPS subfamily. In terms of assembly, homodimer. The cofactor is Mg(2+). Thiamine diphosphate serves as cofactor.

The enzyme catalyses D-glyceraldehyde 3-phosphate + pyruvate + H(+) = 1-deoxy-D-xylulose 5-phosphate + CO2. Its pathway is metabolic intermediate biosynthesis; 1-deoxy-D-xylulose 5-phosphate biosynthesis; 1-deoxy-D-xylulose 5-phosphate from D-glyceraldehyde 3-phosphate and pyruvate: step 1/1. Catalyzes the acyloin condensation reaction between C atoms 2 and 3 of pyruvate and glyceraldehyde 3-phosphate to yield 1-deoxy-D-xylulose-5-phosphate (DXP). In Prochlorococcus marinus (strain MIT 9303), this protein is 1-deoxy-D-xylulose-5-phosphate synthase.